The chain runs to 140 residues: Large ribosomal subunit protein bL17 (140 aa).

Belongs to the bacterial ribosomal protein bL17 family. Part of the 50S ribosomal subunit. Contacts protein L32.

The polypeptide is Large ribosomal subunit protein bL17 (Rhizobium etli (strain ATCC 51251 / DSM 11541 / JCM 21823 / NBRC 15573 / CFN 42)).